The following is a 346-amino-acid chain: N-acetyl-gamma-glutamyl-phosphate reductase (346 aa).

The active site involves Cys149.

It belongs to the NAGSA dehydrogenase family. Type 1 subfamily.

It localises to the cytoplasm. The catalysed reaction is N-acetyl-L-glutamate 5-semialdehyde + phosphate + NADP(+) = N-acetyl-L-glutamyl 5-phosphate + NADPH + H(+). It participates in amino-acid biosynthesis; L-arginine biosynthesis; N(2)-acetyl-L-ornithine from L-glutamate: step 3/4. Functionally, catalyzes the NADPH-dependent reduction of N-acetyl-5-glutamyl phosphate to yield N-acetyl-L-glutamate 5-semialdehyde. The chain is N-acetyl-gamma-glutamyl-phosphate reductase from Micrococcus luteus (strain ATCC 4698 / DSM 20030 / JCM 1464 / CCM 169 / CCUG 5858 / IAM 1056 / NBRC 3333 / NCIMB 9278 / NCTC 2665 / VKM Ac-2230) (Micrococcus lysodeikticus).